The primary structure comprises 343 residues: UDP-3-O-acylglucosamine N-acyltransferase (343 aa).

The active-site Proton acceptor is the His248.

It belongs to the transferase hexapeptide repeat family. LpxD subfamily. Homotrimer.

It carries out the reaction a UDP-3-O-[(3R)-3-hydroxyacyl]-alpha-D-glucosamine + a (3R)-hydroxyacyl-[ACP] = a UDP-2-N,3-O-bis[(3R)-3-hydroxyacyl]-alpha-D-glucosamine + holo-[ACP] + H(+). It participates in bacterial outer membrane biogenesis; LPS lipid A biosynthesis. Functionally, catalyzes the N-acylation of UDP-3-O-acylglucosamine using 3-hydroxyacyl-ACP as the acyl donor. Is involved in the biosynthesis of lipid A, a phosphorylated glycolipid that anchors the lipopolysaccharide to the outer membrane of the cell. This is UDP-3-O-acylglucosamine N-acyltransferase from Microcystis aeruginosa (strain NIES-843 / IAM M-2473).